Here is a 328-residue protein sequence, read N- to C-terminus: Extracellular exo-alpha-(1-&gt;5)-L-arabinofuranosidase (328 aa).

Residues 1–43 constitute a signal peptide (tat-tyPE signal); sequence MCTREAVRMSREHDLPEIPSRRLLLKGAAAAGALTAVPGVAHA. Catalysis depends on D60, which acts as the Proton acceptor. Catalysis depends on E236, which acts as the Proton donor.

Belongs to the glycosyl hydrolase 43 family. Predicted to be exported by the Tat system. The position of the signal peptide cleavage has been experimentally proven.

Its subcellular location is the secreted. It catalyses the reaction Hydrolysis of terminal non-reducing alpha-L-arabinofuranoside residues in alpha-L-arabinosides.. Its pathway is glycan metabolism; L-arabinan degradation. Involved in the degradation of arabinan and is a key enzyme in the complete degradation of the plant cell wall. Catalyzes only the cleavage of terminal alpha-(1-&gt;5) arabinofuranosyl bonds of arabinan present in the arabinofuranosyl polysaccharides or oligosaccharides. It cannot act on other arabinose-containing polysaccharides and arabinoxylo-oligosaccharides. The sequence is that of Extracellular exo-alpha-(1-&gt;5)-L-arabinofuranosidase from Streptomyces chartreusis.